A 598-amino-acid polypeptide reads, in one-letter code: MQKTQEKKNMKEMEFFTEYGDANRYRILEVIGKGSYGVVCAAIDTQTGEKVAIKKINDVFEHVSDALRILREVKLLRLLRHPDIVEIKSIMLPPSKREFKDIYVVFELMESDLHQVIKANDDLTREHHQFFLYQMLRALKYMHTANVYHRDLKPKNILANANCKLKVCDFGLARVSFNDTPTTVFWTDYVATRWYRAPELCGSFCSKYTPAIDIWSIGCIFAEVLTGKPLFPGKSVVHQLDLITDLLGTPKSETIAGVRNEKARKYLNEMRKKNLVPFSQKFPNADPLALRLLQRLLAFDPKDRPTAAEALADPYFKCLAKVEREPSCQPISKMEFEFERRRLTKDDIRELIYREILEYHPQLLKDYMNSEGSSFLYPSAIGHLRKQFAYLEENSGKSGPVIPPDRKHASLPRSAVHSSAVNSNAQPSLNASDSRRVSIEPSRNGVVPSTSAYSTKPLGPPPRVPSGKPGRVVESSVTYENDRNLKESSYDARTSYYRSTVLPPQTVSPNCYFLPNTMNQEKRSGTEAASQPKPQFVPTQCNSAKPAELNPNPYVQSQHKVGIDAKLLHAQSQYGPAGAAAVAVAAHRNIGAVGYGMS.

Residues 25-316 (YRILEVIGKG…AAEALADPYF (292 aa)) form the Protein kinase domain. Residues 31-39 (IGKGSYGVV) and Lys54 each bind ATP. The active-site Proton acceptor is the Asp151. Thr187 is subject to Phosphothreonine. The TXY motif lies at 187-189 (TDY). Phosphotyrosine is present on Tyr189. The residue at position 192 (Thr192) is a Phosphothreonine. A disordered region spans residues 396-486 (GKSGPVIPPD…VTYENDRNLK (91 aa)). Residues 414 to 425 (SAVHSSAVNSNA) are compositionally biased toward low complexity.

The protein belongs to the protein kinase superfamily. CMGC Ser/Thr protein kinase family. MAP kinase subfamily. Dually phosphorylated on Thr-187 and Tyr-189, which activates the enzyme.

The catalysed reaction is L-seryl-[protein] + ATP = O-phospho-L-seryl-[protein] + ADP + H(+). It catalyses the reaction L-threonyl-[protein] + ATP = O-phospho-L-threonyl-[protein] + ADP + H(+). Activated by threonine and tyrosine phosphorylation. The chain is Mitogen-activated protein kinase 19 (MPK19) from Arabidopsis thaliana (Mouse-ear cress).